The primary structure comprises 350 residues: Anthranilate phosphoribosyltransferase (350 aa).

5-phospho-alpha-D-ribose 1-diphosphate is bound by residues G81, 84–85, T89, 91–94, 109–117, and S121; these read GD, NIST, and KHGGRSVSS. G81 is a binding site for anthranilate. A Mg(2+)-binding site is contributed by S93. R167 contributes to the anthranilate binding site. Mg(2+) contacts are provided by D230 and E231.

Belongs to the anthranilate phosphoribosyltransferase family. Homodimer. The cofactor is Mg(2+).

The catalysed reaction is N-(5-phospho-beta-D-ribosyl)anthranilate + diphosphate = 5-phospho-alpha-D-ribose 1-diphosphate + anthranilate. Its pathway is amino-acid biosynthesis; L-tryptophan biosynthesis; L-tryptophan from chorismate: step 2/5. Functionally, catalyzes the transfer of the phosphoribosyl group of 5-phosphorylribose-1-pyrophosphate (PRPP) to anthranilate to yield N-(5'-phosphoribosyl)-anthranilate (PRA). This Nitrosospira multiformis (strain ATCC 25196 / NCIMB 11849 / C 71) protein is Anthranilate phosphoribosyltransferase.